Reading from the N-terminus, the 904-residue chain is MATIHVDGKALEVNGADNLLQACLSLGLDIPYFCWHPALGSVGACRQCAVKQYTDENDTRGRIVMSCMTPASDGTWISIDDEESKAFRASVVEWLMTNHPHDCPVCEEGGHCHLQDMTVMTGHNERRYRFTKRTHQNQDLGPFIAHEMNRCIACYRCVRYYKDYAGGTDLGVYGAHDNVYFGRVEDGVLESEFSGNLTEVCPTGVFTDKTHSERYNRKWDMQFAPSICHGCSSGCNISPGERYGELRRIENRFNGSVNQYFLCDRGRFGYGYVNRKDRPRQPQLADGTKLGLDAALDKAADLLRGRTIVGIGSPRASLESNYGLRELVGAEYFYSGMEAGELARVRLALNVLNNSPLPVPTLRDIEDHDAVFVLGEDLTQTAARVALAVRQATKGKAEAMAEAMKVQPWLDAAVKNIGQHALYPLFIASLAETKLDDVAEECVHAAPADLARIGFAVAHAIDPSAPAVAGLDDEAQALAQRIADALVAAKRPLVVAGTSLADPALIEAAANIAKALKLREKNGSLSLVVPEANSLGLAMLGGESVDAALDAVISGKADAIVVLENDLYARVPAAKVDAALAAAKVVIVADHSKTATVDRAHLVLPAASFAEGDGTLVSQEGRAQRFFQVFDPQYLDSSIQIHEGWRWMHALRATLLNKPVDWTQLDHVTSACAEAAPQLAGIVNAAPSAAFRIKGMKLAREPLRYSGRTAMRANISVHEPRTPQDKDTAFAFSMEGYSGSAEPRQQVPFAWSPGWNSPQAWNKFQDEVGGHLRAGDPGVRLIESQGDRLNWFNAIPGAFNPARGIWTAVPFFHLFGSEESSSRAAPVQERIPAAYVALAKSEADRLGVNDGALLSLNVAGVALRLPLRINEELGAGLVALPKGLAGIPPAIFGASVEGLQEAAQ.

The 2Fe-2S ferredoxin-type domain maps to 1–83 (MATIHVDGKA…GTWISIDDEE (83 aa)). Residues Cys-34, Cys-45, Cys-48, and Cys-67 each contribute to the [2Fe-2S] cluster site. The region spanning 83 to 122 (ESKAFRASVVEWLMTNHPHDCPVCEEGGHCHLQDMTVMTG) is the 4Fe-4S His(Cys)3-ligated-type domain. Residues His-99, Cys-103, Cys-106, Cys-112, Cys-151, Cys-154, Cys-157, Cys-201, Cys-228, Cys-231, Cys-235, and Cys-263 each contribute to the [4Fe-4S] cluster site. In terms of domain architecture, 4Fe-4S Mo/W bis-MGD-type spans 221–277 (MQFAPSICHGCSSGCNISPGERYGELRRIENRFNGSVNQYFLCDRGRFGYGYVNRKD).

Belongs to the complex I 75 kDa subunit family. As to quaternary structure, composed of 13 different subunits. Subunits NuoCD, E, F, and G constitute the peripheral sector of the complex. [2Fe-2S] cluster is required as a cofactor. It depends on [4Fe-4S] cluster as a cofactor.

It carries out the reaction a quinone + NADH + 5 H(+)(in) = a quinol + NAD(+) + 4 H(+)(out). In terms of biological role, NDH-1 shuttles electrons from NADH, via FMN and iron-sulfur (Fe-S) centers, to quinones in the respiratory chain. The immediate electron acceptor for the enzyme in this species is believed to be ubiquinone. Couples the redox reaction to proton translocation (for every two electrons transferred, four hydrogen ions are translocated across the cytoplasmic membrane), and thus conserves the redox energy in a proton gradient. The chain is NADH-quinone oxidoreductase subunit G (nuoG) from Pseudomonas putida (strain ATCC 47054 / DSM 6125 / CFBP 8728 / NCIMB 11950 / KT2440).